The primary structure comprises 176 residues: 3-hydroxydecanoyl-[acyl-carrier-protein] dehydratase (176 aa).

H70 is an active-site residue.

Belongs to the thioester dehydratase family. FabA subfamily. Homodimer.

It localises to the cytoplasm. It carries out the reaction a (3R)-hydroxyacyl-[ACP] = a (2E)-enoyl-[ACP] + H2O. The catalysed reaction is (3R)-hydroxydecanoyl-[ACP] = (2E)-decenoyl-[ACP] + H2O. The enzyme catalyses (2E)-decenoyl-[ACP] = (3Z)-decenoyl-[ACP]. It participates in lipid metabolism; fatty acid biosynthesis. Functionally, necessary for the introduction of cis unsaturation into fatty acids. Catalyzes the dehydration of (3R)-3-hydroxydecanoyl-ACP to E-(2)-decenoyl-ACP and then its isomerization to Z-(3)-decenoyl-ACP. Can catalyze the dehydratase reaction for beta-hydroxyacyl-ACPs with saturated chain lengths up to 16:0, being most active on intermediate chain length. The polypeptide is 3-hydroxydecanoyl-[acyl-carrier-protein] dehydratase (Alkalilimnicola ehrlichii (strain ATCC BAA-1101 / DSM 17681 / MLHE-1)).